Reading from the N-terminus, the 606-residue chain is Leucine-rich repeat and immunoglobulin-like domain-containing nogo receptor-interacting protein 2 (606 aa).

An N-terminal signal peptide occupies residues 1–27 (MLHTAISCWQPFLGLAVVLIFMGSTIG). Positions 28–57 (CPARCECSAQNKSVSCHRRRLIAIPEGIPI) constitute an LRRNT domain. Topologically, residues 28 to 545 (CPARCECSAQ…LDLKTILVST (518 aa)) are extracellular. An N-linked (GlcNAc...) asparagine glycan is attached at asparagine 38. LRR repeat units lie at residues 58–79 (ETKI…EFIS), 82–103 (LLEE…AFNN), 106–127 (NLRS…VFTG), 130–151 (NLTK…MFQD), 154–175 (NLKS…AFSG), 178–199 (SLEQ…ALSH), 202–223 (SLIS…AFKR), 226–247 (HLKH…NSLY), 250–271 (NLTS…AFKH), 274–295 (YLTH…MFSD), 298–319 (RLQE…SFQG), and 322–343 (FLRV…VFSS). Residue asparagine 130 is glycosylated (N-linked (GlcNAc...) asparagine). Asparagine 188 carries N-linked (GlcNAc...) asparagine glycosylation. Asparagine 279 is a glycosylation site (N-linked (GlcNAc...) asparagine). A glycan (N-linked (GlcNAc...) asparagine) is linked at asparagine 327. The LRRCT domain maps to 355–409 (NPLACDCRLLWILQRQPTLQFGGQQPMCAGPDTIRERSFKDFHSTALSFYFTCKK). The Ig-like C2-type domain maps to 410–499 (PKIREKKLQH…GNDTFTASLT (90 aa)). A disulfide bridge links cysteine 432 with cysteine 483. Residues 546-566 (AMGCFTFLGVVLFCFLLLFVW) form a helical membrane-spanning segment. Topologically, residues 567–606 (SRGKGKHKNSIDLEYVPRKNNGAVVEGEVAGPRRFNMKMI) are cytoplasmic.

It localises to the membrane. This is Leucine-rich repeat and immunoglobulin-like domain-containing nogo receptor-interacting protein 2 (LINGO2) from Homo sapiens (Human).